Consider the following 141-residue polypeptide: MWVLGIAATFCGLFLLPGFALQIQCYQCEEFQLNNDCSSPEFIVNCTVNVQDMCQKEVMEQSAGIMYRKSCASSAACLIASAGYQSFCSPGKLNSVCISCCNTPLCNGPRPKKRGSSASALRPGLRTTILFLKLALFSAHC.

Positions 1–20 (MWVLGIAATFCGLFLLPGFA) are cleaved as a signal peptide. 6 disulfide bridges follow: cysteine 25–cysteine 54, cysteine 28–cysteine 37, cysteine 46–cysteine 71, cysteine 77–cysteine 100, cysteine 88–cysteine 97, and cysteine 101–cysteine 106. One can recognise a UPAR/Ly6 domain in the interval 25-107 (CYQCEEFQLN…ISCCNTPLCN (83 aa)). Asparagine 45 carries N-linked (GlcNAc...) asparagine glycosylation. Residue serine 117 is the site of GPI-anchor amidated serine attachment. Positions 118–141 (ASALRPGLRTTILFLKLALFSAHC) are cleaved as a propeptide — removed in mature form.

In terms of assembly, interacts with CHRNA4 and nAChRs containing alpha-4:beta-2 (CHRNA4:CHRNB2) and alpha-7 (CHRNA7) subunits.

Its subcellular location is the cell membrane. In terms of biological role, believed to act as a modulator of nicotinic acetylcholine receptors (nAChRs) activity. In vitro increases receptor desensitization and decreases affinity for ACh of alpha-4:beta-2-containing nAChRs. May play a role in the intracellular trafficking of alpha-4:beta-2 and alpha-7-containing nAChRs and may inhibit their expression at the cell surface. May be involved in the control of anxiety. In Homo sapiens (Human), this protein is Ly6/PLAUR domain-containing protein 1 (LYPD1).